The following is a 133-amino-acid chain: Transcription antitermination protein NusB (133 aa).

This sequence belongs to the NusB family.

In terms of biological role, involved in transcription antitermination. Required for transcription of ribosomal RNA (rRNA) genes. Binds specifically to the boxA antiterminator sequence of the ribosomal RNA (rrn) operons. This Pediococcus pentosaceus (strain ATCC 25745 / CCUG 21536 / LMG 10740 / 183-1w) protein is Transcription antitermination protein NusB.